Here is a 124-residue protein sequence, read N- to C-terminus: Fluoride-specific ion channel FluC 1 (124 aa).

A run of 4 helical transmembrane segments spans residues 1-21 (MCAV…ALGA), 30-50 (LWPG…LLGY), 64-84 (FLGV…VDAV), and 93-113 (LYVV…MLAG). Na(+)-binding residues include Gly-71 and Thr-74.

It belongs to the fluoride channel Fluc/FEX (TC 1.A.43) family.

Its subcellular location is the cell membrane. The catalysed reaction is fluoride(in) = fluoride(out). Its activity is regulated as follows. Na(+) is not transported, but it plays an essential structural role and its presence is essential for fluoride channel function. Fluoride-specific ion channel. Important for reducing fluoride concentration in the cell, thus reducing its toxicity. The polypeptide is Fluoride-specific ion channel FluC 1 (Rhodococcus jostii (strain RHA1)).